We begin with the raw amino-acid sequence, 361 residues long: MTQVYNFSAGPAMLPVEVLRRAEQELRNWHGLGTSVMEISHRSKEFMQVAEESEKDLRDLLQIPANYKVLFCHGGARAQFAAVPLNLLGDSNSADYIDGGYWAHSAVKEAQKYCTPHVIDVTTHDNGLTGIQPMKQWKLSDNAAYVHYCPNETIDGVAINEQPDFGNKVVVADYSSAILSRPIDISRYGVIYAGAQKNIGPAGLTLVIVREDLLGKAHTALPSILDYKVLADNDSMFNTPPTFAWYLSGLVFKWLKEQGGLGEMEKRNQAKAELLYGAIDRTGFYRNQVAIANRSWMNVPFQMAEASLDKLFLSEAEAQGLQALKGHRVAGGMRASIYNAMPIEGVKALTDFMADFERRHG.

R42 is an L-glutamate binding site. Pyridoxal 5'-phosphate is bound by residues 76–77 (AR), W102, T153, D173, and Q196. K197 bears the N6-(pyridoxal phosphate)lysine mark. A pyridoxal 5'-phosphate-binding site is contributed by 238–239 (NT).

Belongs to the class-V pyridoxal-phosphate-dependent aminotransferase family. SerC subfamily. In terms of assembly, homodimer. The cofactor is pyridoxal 5'-phosphate.

It is found in the cytoplasm. It carries out the reaction O-phospho-L-serine + 2-oxoglutarate = 3-phosphooxypyruvate + L-glutamate. It catalyses the reaction 4-(phosphooxy)-L-threonine + 2-oxoglutarate = (R)-3-hydroxy-2-oxo-4-phosphooxybutanoate + L-glutamate. The protein operates within amino-acid biosynthesis; L-serine biosynthesis; L-serine from 3-phospho-D-glycerate: step 2/3. Its pathway is cofactor biosynthesis; pyridoxine 5'-phosphate biosynthesis; pyridoxine 5'-phosphate from D-erythrose 4-phosphate: step 3/5. In terms of biological role, catalyzes the reversible conversion of 3-phosphohydroxypyruvate to phosphoserine and of 3-hydroxy-2-oxo-4-phosphonooxybutanoate to phosphohydroxythreonine. The polypeptide is Phosphoserine aminotransferase (Yersinia pseudotuberculosis serotype IB (strain PB1/+)).